We begin with the raw amino-acid sequence, 237 residues long: MNVNYLNDSDLDFLQHCSEEQLANFARLLTHNEKGKTRLSSVLMRNELFKSMEGHPEQHRRNWQLIAGELQHFGGDSIANKLRGHGKLYRAILLDVSKRLKLKADKEMSTFEIEQQLLEQFLRNTWKKMDEEHKQEFLHAVDARVNELEELLPLLMKDKLLAKGVSHLLSSQLTRILRTHAAMSVLGHGLLRGAGLGGPVGAALNGVKAVSGSSYRVTIPAVLQIACLRRMVSATQV.

The protein belongs to the UPF0174 family.

The chain is UPF0174 protein YaaW from Escherichia coli O157:H7.